The following is a 727-amino-acid chain: Polyribonucleotide nucleotidyltransferase (727 aa).

Positions 488 and 494 each coordinate Mg(2+). Residues 555 to 614 (PKLYTMKINPEKIRDVIGKGGATIRALTDETGCQINIEEDGTITIAATEAAKADEAKRRI) form the KH domain. One can recognise an S1 motif domain in the interval 624 to 692 (GKIYEGPVTK…DKGRVKLSMK (69 aa)). A disordered region spans residues 691–727 (MKALADRPAGDSGRPAPAERGERRERRDGGASEQQQQ). Residues 707–720 (PAERGERRERRDGG) are compositionally biased toward basic and acidic residues.

This sequence belongs to the polyribonucleotide nucleotidyltransferase family. The cofactor is Mg(2+).

The protein localises to the cytoplasm. The catalysed reaction is RNA(n+1) + phosphate = RNA(n) + a ribonucleoside 5'-diphosphate. Functionally, involved in mRNA degradation. Catalyzes the phosphorolysis of single-stranded polyribonucleotides processively in the 3'- to 5'-direction. The protein is Polyribonucleotide nucleotidyltransferase of Acidovorax sp. (strain JS42).